The following is a 145-amino-acid chain: Transcriptional regulator MraZ (145 aa).

2 SpoVT-AbrB domains span residues 5-49 and 78-121; these read TYNH…LESE and TYKI…AKEV.

It belongs to the MraZ family. In terms of assembly, forms oligomers.

Its subcellular location is the cytoplasm. It localises to the nucleoid. This is Transcriptional regulator MraZ from Ureaplasma parvum serovar 3 (strain ATCC 27815 / 27 / NCTC 11736).